The chain runs to 154 residues: Large ribosomal subunit protein uL13 (154 aa).

Belongs to the universal ribosomal protein uL13 family. As to quaternary structure, part of the 50S ribosomal subunit.

Functionally, this protein is one of the early assembly proteins of the 50S ribosomal subunit, although it is not seen to bind rRNA by itself. It is important during the early stages of 50S assembly. The polypeptide is Large ribosomal subunit protein uL13 (Mesorhizobium japonicum (strain LMG 29417 / CECT 9101 / MAFF 303099) (Mesorhizobium loti (strain MAFF 303099))).